A 145-amino-acid polypeptide reads, in one-letter code: Ribonuclease H (145 aa).

Residues 2–143 (SKKEVAIYTD…ADSLARKAII (142 aa)) enclose the RNase H type-1 domain. Residues aspartate 11, glutamate 49, aspartate 71, and aspartate 135 each coordinate Mg(2+).

It belongs to the RNase H family. Monomer. Mg(2+) serves as cofactor.

Its subcellular location is the cytoplasm. The catalysed reaction is Endonucleolytic cleavage to 5'-phosphomonoester.. In terms of biological role, endonuclease that specifically degrades the RNA of RNA-DNA hybrids. The polypeptide is Ribonuclease H (Wolbachia sp. subsp. Drosophila simulans (strain wRi)).